Here is a 468-residue protein sequence, read N- to C-terminus: 6-phospho-beta-galactosidase (468 aa).

D-galactose 6-phosphate-binding residues include glutamine 19, histidine 116, asparagine 159, glutamate 160, and asparagine 297. The Proton donor role is filled by glutamate 160. Glutamate 375 acts as the Nucleophile in catalysis. Positions 428, 429, 435, and 437 each coordinate D-galactose 6-phosphate.

Belongs to the glycosyl hydrolase 1 family.

It carries out the reaction a 6-phospho-beta-D-galactoside + H2O = D-galactose 6-phosphate + an alcohol. Its pathway is carbohydrate metabolism; lactose degradation; D-galactose 6-phosphate and beta-D-glucose from lactose 6-phosphate: step 1/1. In Streptococcus pyogenes serotype M28 (strain MGAS6180), this protein is 6-phospho-beta-galactosidase.